A 259-amino-acid polypeptide reads, in one-letter code: MENISEKAIIKGKIGKNCKIGEGVIIDENVVIGDNNIIDPYTIITGYTTIGDNNHIYSHAVLGSEPQDLKYHGEKTELIIGNNNKIREFTLINPGTEGGGAVTKIGDNNLLMGYVHVAHDVIIANNCILANAATLAGHVELEDYVVIGGMTPVHQFVKIGAHAMIGGASAVAQDIPPFTIAEGNRAKLRGLNLTGLRRRFQNRSDIDAIKKAYKELFESGKPLKDTAKEILESTDNEYVKHLCEFVLNSKRGIPYDRKV.

Belongs to the transferase hexapeptide repeat family. LpxA subfamily. As to quaternary structure, homotrimer.

Its subcellular location is the cytoplasm. It carries out the reaction a (3R)-hydroxyacyl-[ACP] + UDP-N-acetyl-alpha-D-glucosamine = a UDP-3-O-[(3R)-3-hydroxyacyl]-N-acetyl-alpha-D-glucosamine + holo-[ACP]. It participates in glycolipid biosynthesis; lipid IV(A) biosynthesis; lipid IV(A) from (3R)-3-hydroxytetradecanoyl-[acyl-carrier-protein] and UDP-N-acetyl-alpha-D-glucosamine: step 1/6. Its function is as follows. Involved in the biosynthesis of lipid A, a phosphorylated glycolipid that anchors the lipopolysaccharide to the outer membrane of the cell. The protein is Acyl-[acyl-carrier-protein]--UDP-N-acetylglucosamine O-acyltransferase of Nautilia profundicola (strain ATCC BAA-1463 / DSM 18972 / AmH).